Reading from the N-terminus, the 125-residue chain is MAMQAAKRANIRLPPEVNRILYIRNLPYKITAEEMYDIFGKYGPIRQIRVGNTPETRGTAYVVYEDIFDAKNACDHLSGFNVCNRYLVVLYYNANRAFQKMDTKKKEEQLKLLKEKYGINTDPPK.

The interval 16–29 (EVNRILYIRNLPYK) is interaction with pre-mRNA branch site. Positions 19 to 94 (RILYIRNLPY…RYLVVLYYNA (76 aa)) constitute an RRM domain. At Lys29 the chain carries N6-acetyllysine; alternate. Lys29 is covalently cross-linked (Glycyl lysine isopeptide (Lys-Gly) (interchain with G-Cter in SUMO2); alternate). An N6-acetyllysine modification is found at Lys41.

As to quaternary structure, component of the 17S U2 SnRNP complex, a ribonucleoprotein complex that contains small nuclear RNA (snRNA) U2 and a number of specific proteins. Part of the SF3B subcomplex of the 17S U2 SnRNP complex. SF3B associates with the splicing subcomplex SF3A and a 12S RNA unit to form the U2 small nuclear ribonucleoproteins complex (U2 snRNP). Within the SF3B complex interacts directly with SF3B1. Component of the minor spliceosome, which splices U12-type introns.

It localises to the nucleus. In terms of biological role, component of the 17S U2 SnRNP complex of the spliceosome, a large ribonucleoprotein complex that removes introns from transcribed pre-mRNAs. The 17S U2 SnRNP complex (1) directly participates in early spliceosome assembly and (2) mediates recognition of the intron branch site during pre-mRNA splicing by promoting the selection of the pre-mRNA branch-site adenosine, the nucleophile for the first step of splicing. Within the 17S U2 SnRNP complex, SF3B6 is part of the SF3B subcomplex, which is required for 'A' complex assembly formed by the stable binding of U2 snRNP to the branchpoint sequence in pre-mRNA. Sequence independent binding of SF3A and SF3B subcomplexes upstream of the branch site is essential, it may anchor U2 snRNP to the pre-mRNA. Within the 17S U2 SnRNP complex, SF3B6 directly contacts the pre-mRNA branch site adenosine for the first catalytic step of splicing. SF3B6 stabilizes the intron branch site-U2 snRNA duplex, thereby promoting-binding of introns with poor sequence complementarity. Also acts as a component of the minor spliceosome, which is involved in the splicing of U12-type introns in pre-mRNAs. The sequence is that of Splicing factor 3B subunit 6 (Sf3b6) from Mus musculus (Mouse).